The following is a 253-amino-acid chain: Indole-3-glycerol phosphate synthase (253 aa).

Belongs to the TrpC family.

It catalyses the reaction 1-(2-carboxyphenylamino)-1-deoxy-D-ribulose 5-phosphate + H(+) = (1S,2R)-1-C-(indol-3-yl)glycerol 3-phosphate + CO2 + H2O. It functions in the pathway amino-acid biosynthesis; L-tryptophan biosynthesis; L-tryptophan from chorismate: step 4/5. This chain is Indole-3-glycerol phosphate synthase, found in Exiguobacterium sp. (strain ATCC BAA-1283 / AT1b).